We begin with the raw amino-acid sequence, 192 residues long: Amelogenin, Y isoform (192 aa).

Positions 1 to 16 are cleaved as a signal peptide; it reads MGTWILFACLLGAAYS. The interval 73 to 192 is disordered; it reads QSPQNHALQP…TDKTKREEVD (120 aa). Positions 87-105 are enriched in low complexity; that stretch reads PMVPAQQPVVPQQPMMPVP. The segment covering 108-117 has biased composition (polar residues); the sequence is HSMTPIQHHQ. The segment covering 132–173 has biased composition (pro residues); the sequence is PIQPQPHQPLQPQPPVHPIQRLPPQPPLPPIFPMQPLPPVLP.

It belongs to the amelogenin family.

It localises to the secreted. The protein localises to the extracellular space. The protein resides in the extracellular matrix. Its function is as follows. Plays a role in the biomineralization of teeth. Seems to regulate the formation of crystallites during the secretory stage of tooth enamel development. Thought to play a major role in the structural organization and mineralization of developing enamel. The chain is Amelogenin, Y isoform (AMELY) from Bos taurus (Bovine).